The following is a 144-amino-acid chain: Probable 4-amino-4-deoxy-L-arabinose-phosphoundecaprenol flippase subunit ArnF (144 aa).

Topologically, residues 1–6 (MTHRRA) are cytoplasmic. Residues 7 to 24 (TLCAMASVALVSAAQLGM) form a helical membrane-spanning segment. The Periplasmic segment spans residues 25–56 (RWSMSRLPSPVQWLEMQEHAQLDLSALRVVCA). The chain crosses the membrane as a helical span at residues 57-77 (SITAYALSMLFWLLALRVLPL). Residues 78–80 (SRA) are Cytoplasmic-facing. Residues 81-101 (YSLLSISYALVYTLAATLPFF) form a helical membrane-spanning segment. Residues 102 to 104 (HET) lie on the Periplasmic side of the membrane. A helical transmembrane segment spans residues 105 to 125 (FTVSKTVGVSLIVAGVLTINL). The Cytoplasmic segment spans residues 126–144 (RRLPRPSPQDLSHENQRFR).

This sequence belongs to the ArnF family. As to quaternary structure, heterodimer of ArnE and ArnF.

The protein localises to the cell inner membrane. It participates in bacterial outer membrane biogenesis; lipopolysaccharide biosynthesis. Functionally, translocates 4-amino-4-deoxy-L-arabinose-phosphoundecaprenol (alpha-L-Ara4N-phosphoundecaprenol) from the cytoplasmic to the periplasmic side of the inner membrane. The polypeptide is Probable 4-amino-4-deoxy-L-arabinose-phosphoundecaprenol flippase subunit ArnF (Pseudomonas syringae pv. syringae (strain B728a)).